We begin with the raw amino-acid sequence, 64 residues long: Metallothionein-like protein 1 (64 aa).

Belongs to the metallothionein superfamily. Type 15 family.

Functionally, metallothioneins have a high content of cysteine residues that bind various heavy metals. The protein is Metallothionein-like protein 1 (MT1) of Prunus avium (Cherry).